Consider the following 441-residue polypeptide: MTAPKKLFIKTYGCQMNVYDSERMSEALVAEGYVETKTAEDADMILLNTCHIREKAAEKVYSELGRLKSLKADNPDLKLGVAGCVAQAEGEEIMRRQPAVDLVVGPQSYHRLPQMEARLREGHKALDTDFPPEDKFEELKARPKARRAPSAFLTVQEGCDKFCAFCVVPYTRGAEVSRPVTRVLDEARDLVERGVREITLLGQNVNAYHGAGADGNEKTLAQLIWALNDIDGLERIRFTTSHPNDMQDDLIEAHRDCPKLMPYLHLPVQSGSDRILKRMNRKHTADSYLRLIERIRVGRPDILLSGDFIVGFPEETEADFQATLDLIEAVNYGYAYSFKYSTRPGTPAAERAQVDPVEADERLQRIQALITRQQQDIQQSMVGRDVSVLIEKPGRFEGQMVGKSEYLHAVHVDQCSAQIGDILPVRIVEAKRNSLAAVTLA.

Residues 5-121 (KKLFIKTYGC…LPQMEARLRE (117 aa)) enclose the MTTase N-terminal domain. [4Fe-4S] cluster is bound by residues Cys-14, Cys-50, Cys-84, Cys-159, Cys-163, and Cys-166. In terms of domain architecture, Radical SAM core spans 145-380 (ARRAPSAFLT…TRQQQDIQQS (236 aa)). The 63-residue stretch at 379 to 441 (QSMVGRDVSV…RNSLAAVTLA (63 aa)) folds into the TRAM domain.

Belongs to the methylthiotransferase family. MiaB subfamily. In terms of assembly, monomer. It depends on [4Fe-4S] cluster as a cofactor.

Its subcellular location is the cytoplasm. It carries out the reaction N(6)-dimethylallyladenosine(37) in tRNA + (sulfur carrier)-SH + AH2 + 2 S-adenosyl-L-methionine = 2-methylsulfanyl-N(6)-dimethylallyladenosine(37) in tRNA + (sulfur carrier)-H + 5'-deoxyadenosine + L-methionine + A + S-adenosyl-L-homocysteine + 2 H(+). Catalyzes the methylthiolation of N6-(dimethylallyl)adenosine (i(6)A), leading to the formation of 2-methylthio-N6-(dimethylallyl)adenosine (ms(2)i(6)A) at position 37 in tRNAs that read codons beginning with uridine. The protein is tRNA-2-methylthio-N(6)-dimethylallyladenosine synthase of Roseobacter denitrificans (strain ATCC 33942 / OCh 114) (Erythrobacter sp. (strain OCh 114)).